The following is a 486-amino-acid chain: MIQVLLVTICLAVFPYQGSSIILESGNVNDYEVVYPRKVTALPKGAVQQKYEDAMQYEFKVNGEPVVLHLEKNKELFSEDYSETHYSPDGREITTYPLVEDHCYYHGRIENDADSTASISACNGLKGHFKLQGEMYLIEPLELSDSEAHAVYKYENVEKEDEAPKMCGVTQNWESHEPIKKASQSNLPPEQEELLKRYIELVVVADHRMYTIYDGDKTEISSIIYEIVNILTQIFRPLHIRVALIGLEIWSSGELSKVTLSADDTLEAFGEWRETVLMNRKRHDHAQLLTGMIFSGTIEGRTYKSRMCDPKHSVGIVRDHRTRRHFVANRMAHELGHNLGIDHDRDSCSCGANSCIMSATVSNEPSSQFSDCSLNQYLKHIIHYHYTTCLYNEPSKTDIVSPPVCGNYYTEVGEDCDCGPPANCQNPCCDAATCKVTTGSQCAEGLCCDQCKFMKEGTVCRVARGDWNNDICTGQSAECPNKGYYG.

The signal sequence occupies residues 1–20; the sequence is MIQVLLVTICLAVFPYQGSS. Residues 21–190 constitute a propeptide that is removed on maturation; that stretch reads IILESGNVND…KASQSNLPPE (170 aa). The residue at position 191 (glutamine 191) is a Pyrrolidone carboxylic acid. In terms of domain architecture, Peptidase M12B spans 197–394; sequence RYIELVVVAD…HYTTCLYNEP (198 aa). The Ca(2+) site is built by glutamate 200 and aspartate 284. Intrachain disulfides connect cysteine 308–cysteine 389, cysteine 348–cysteine 372, and cysteine 350–cysteine 355. Residue histidine 333 participates in Zn(2+) binding. Glutamate 334 is an active-site residue. Residues histidine 337 and histidine 343 each contribute to the Zn(2+) site. Positions 389 and 392 each coordinate Ca(2+). Residues 402 to 486 form the Disintegrin domain; the sequence is PPVCGNYYTE…AECPNKGYYG (85 aa). Intrachain disulfides connect cysteine 405–cysteine 424, cysteine 416–cysteine 434, cysteine 418–cysteine 429, cysteine 428–cysteine 451, cysteine 442–cysteine 448, cysteine 447–cysteine 472, and cysteine 460–cysteine 479. Positions 464–466 match the Cell attachment site motif; that stretch reads RGD.

This sequence belongs to the venom metalloproteinase (M12B) family. P-II subfamily. P-IIb sub-subfamily. Monomer. Requires Zn(2+) as cofactor. Expressed by the venom gland.

Its subcellular location is the secreted. In terms of biological role, snake venom zinc metalloproteinase that inhibits ADP-induced platelet aggregation (probably by binding integrin alpha-IIb/beta-3 (ITGA2B/ITGB3)) and degrades fibrinogen. The polypeptide is Zinc metalloproteinase-disintegrin VMP-II (Crotalus atrox (Western diamondback rattlesnake)).